We begin with the raw amino-acid sequence, 329 residues long: D-alanine--D-alanine ligase (329 aa).

The ATP-grasp domain maps to 120–326 (KLWYDALDIP…FHEFLEDCIN (207 aa)). Residue 150–205 (AFEKWGKVFVKAARQGSSVGCYSVAEKQAIAKAVNDAFGYSDQVLVEKAVKPRELE) coordinates ATP. Mg(2+) contacts are provided by aspartate 280, glutamate 293, and asparagine 295.

It belongs to the D-alanine--D-alanine ligase family. The cofactor is Mg(2+). It depends on Mn(2+) as a cofactor.

The protein localises to the cytoplasm. It carries out the reaction 2 D-alanine + ATP = D-alanyl-D-alanine + ADP + phosphate + H(+). Its pathway is cell wall biogenesis; peptidoglycan biosynthesis. Functionally, cell wall formation. The protein is D-alanine--D-alanine ligase of Vibrio parahaemolyticus serotype O3:K6 (strain RIMD 2210633).